We begin with the raw amino-acid sequence, 191 residues long: Leucyl/phenylalanyl-tRNA--protein transferase (191 aa).

Belongs to the L/F-transferase family.

It localises to the cytoplasm. The catalysed reaction is N-terminal L-lysyl-[protein] + L-leucyl-tRNA(Leu) = N-terminal L-leucyl-L-lysyl-[protein] + tRNA(Leu) + H(+). The enzyme catalyses N-terminal L-arginyl-[protein] + L-leucyl-tRNA(Leu) = N-terminal L-leucyl-L-arginyl-[protein] + tRNA(Leu) + H(+). It carries out the reaction L-phenylalanyl-tRNA(Phe) + an N-terminal L-alpha-aminoacyl-[protein] = an N-terminal L-phenylalanyl-L-alpha-aminoacyl-[protein] + tRNA(Phe). Functionally, functions in the N-end rule pathway of protein degradation where it conjugates Leu, Phe and, less efficiently, Met from aminoacyl-tRNAs to the N-termini of proteins containing an N-terminal arginine or lysine. This is Leucyl/phenylalanyl-tRNA--protein transferase from Rubrobacter xylanophilus (strain DSM 9941 / JCM 11954 / NBRC 16129 / PRD-1).